A 312-amino-acid polypeptide reads, in one-letter code: Malate dehydrogenase (312 aa).

NAD(+) contacts are provided by residues 7-13 (GAAGGIG) and aspartate 34. Substrate contacts are provided by arginine 81 and arginine 87. NAD(+) contacts are provided by residues asparagine 94 and 117–119 (ITN). Substrate-binding residues include asparagine 119 and arginine 153. The active-site Proton acceptor is the histidine 177. An NAD(+)-binding site is contributed by methionine 227.

Belongs to the LDH/MDH superfamily. MDH type 1 family. As to quaternary structure, homodimer.

The enzyme catalyses (S)-malate + NAD(+) = oxaloacetate + NADH + H(+). Its function is as follows. Catalyzes the reversible oxidation of malate to oxaloacetate. In Klebsiella pneumoniae (strain 342), this protein is Malate dehydrogenase.